We begin with the raw amino-acid sequence, 428 residues long: Glutamate-1-semialdehyde 2,1-aminomutase (428 aa).

N6-(pyridoxal phosphate)lysine is present on Lys265.

It belongs to the class-III pyridoxal-phosphate-dependent aminotransferase family. HemL subfamily. Homodimer. It depends on pyridoxal 5'-phosphate as a cofactor.

It localises to the cytoplasm. It carries out the reaction (S)-4-amino-5-oxopentanoate = 5-aminolevulinate. Its pathway is porphyrin-containing compound metabolism; protoporphyrin-IX biosynthesis; 5-aminolevulinate from L-glutamyl-tRNA(Glu): step 2/2. This is Glutamate-1-semialdehyde 2,1-aminomutase from Shewanella woodyi (strain ATCC 51908 / MS32).